The following is a 348-amino-acid chain: Spore wall and anchoring disk complex protein EnP1 (348 aa).

The first 16 residues, 1-16 (MKLLGLLISAFGAINA), serve as a signal peptide directing secretion. N-linked (GlcNAc...) asparagine glycosylation is found at asparagine 47, asparagine 139, and asparagine 140. The HBM1 signature appears at 193–198 (PRHGRS). The HBM2 motif lies at 248–256 (IRKGKDKKC). The short motif at 322 to 327 (LKKIRG) is the HBM3 element.

It is found in the spore wall. The protein resides in the spore. It localises to the perispore. In terms of biological role, spore wall protein involved in the adhesion to host cells surface glycoaminoglycans (GAGs). Microsporidian spore adherence is an integral part of activation and host cell infection. The protein is Spore wall and anchoring disk complex protein EnP1 (EnP1) of Encephalitozoon intestinalis (Microsporidian parasite).